The chain runs to 307 residues: Agmatinase (307 aa).

His128, Asp151, His153, Asp155, Asp232, and Asp234 together coordinate Mn(2+).

It belongs to the arginase family. Agmatinase subfamily. The cofactor is Mn(2+).

The catalysed reaction is agmatine + H2O = urea + putrescine. Its pathway is amine and polyamine biosynthesis; putrescine biosynthesis via agmatine pathway; putrescine from agmatine: step 1/1. Its function is as follows. Catalyzes the formation of putrescine from agmatine. The polypeptide is Agmatinase (Neisseria meningitidis serogroup A / serotype 4A (strain DSM 15465 / Z2491)).